Here is a 193-residue protein sequence, read N- to C-terminus: dCTP deaminase, dUMP-forming (193 aa).

DCTP-binding positions include 101 to 106 (KSSLGR), D119, 127 to 129 (TLE), Q148, Y162, and Q174. E129 functions as the Proton donor/acceptor in the catalytic mechanism. The interval 162 to 184 (YGSKGTGSHYQGQRGPTPSRSYE) is disordered. The segment covering 167–183 (TGSHYQGQRGPTPSRSY) has biased composition (polar residues).

It belongs to the dCTP deaminase family. Homotrimer.

The enzyme catalyses dCTP + 2 H2O = dUMP + NH4(+) + diphosphate. The protein operates within pyrimidine metabolism; dUMP biosynthesis; dUMP from dCTP: step 1/1. In terms of biological role, bifunctional enzyme that catalyzes both the deamination of dCTP to dUTP and the hydrolysis of dUTP to dUMP without releasing the toxic dUTP intermediate. This Bifidobacterium longum (strain DJO10A) protein is dCTP deaminase, dUMP-forming.